The sequence spans 232 residues: Flagellar L-ring protein (232 aa).

The signal sequence occupies residues 1 to 21 (MQKNAAHTYAISSLLVLSLTG). A lipid anchor (N-palmitoyl cysteine) is attached at cysteine 22. Cysteine 22 carries S-diacylglycerol cysteine lipidation.

It belongs to the FlgH family. As to quaternary structure, the basal body constitutes a major portion of the flagellar organelle and consists of four rings (L,P,S, and M) mounted on a central rod.

The protein localises to the cell outer membrane. It localises to the bacterial flagellum basal body. In terms of biological role, assembles around the rod to form the L-ring and probably protects the motor/basal body from shearing forces during rotation. The protein is Flagellar L-ring protein of Shigella boydii serotype 18 (strain CDC 3083-94 / BS512).